The following is a 70-amino-acid chain: uncharacterized protein (70 aa).

This is an uncharacterized protein from Haloarcula hispanica (His1V).